The following is a 131-amino-acid chain: MMWMICLFGGLGAMARYVLDVSIQRGWNRENRRTNRNFPLSTLVINGVASLCAGIAMMSYYSQSVDMDTVMMFVVGFLGGFSTFSTALNEVVSLIRQRRFTLALGYGIATVAVPLICVAAGFGIALLANPA.

The next 3 helical transmembrane spans lie at 38 to 58 (FPLSTLVINGVASLCAGIAMM), 69 to 89 (TVMMFVVGFLGGFSTFSTALN), and 108 to 128 (IATVAVPLICVAAGFGIALLA). Positions 79 and 82 each coordinate Na(+).

This sequence belongs to the fluoride channel Fluc/FEX (TC 1.A.43) family.

The protein resides in the cell membrane. The catalysed reaction is fluoride(in) = fluoride(out). Na(+) is not transported, but it plays an essential structural role and its presence is essential for fluoride channel function. Functionally, fluoride-specific ion channel. Important for reducing fluoride concentration in the cell, thus reducing its toxicity. The protein is Fluoride-specific ion channel FluC 1 of Bifidobacterium longum (strain NCC 2705).